Here is a 435-residue protein sequence, read N- to C-terminus: E3 ubiquitin-protein ligase itt1 (435 aa).

Residues 16–135 (DELIALQSIY…EHVRSIATIA (120 aa)) form the RWD domain. Residues 170–420 (RKFQCNVCFD…DPVSSCYGML (251 aa)) form a TRIAD supradomain region. Cys-174, Cys-177, Cys-192, His-194, Cys-197, Cys-200, Cys-219, Cys-224, Cys-266, Cys-271, Cys-286, Cys-289, Cys-294, Cys-297, His-302, Cys-308, Cys-368, and Cys-371 together coordinate Zn(2+). The segment at 174–224 (CNVCFDEFNGTDCFQLTRCGHVSCQSCLRDYYTMCIQEGMFSQIKCIDLDC) adopts an RING-type 1 zinc-finger fold. The segment at 245–308 (TNRYKELEEK…ATWHGDLSPC (64 aa)) adopts an IBR-type zinc-finger fold. The RING-type 2; atypical zinc finger occupies 368–396 (CPTCDRVVERIDGCCHMNCLCGTHFCFLC). The active site involves Cys-381. Residues Cys-386, Cys-388, Cys-393, Cys-396, His-408, and Cys-416 each contribute to the Zn(2+) site.

It belongs to the RBR family. RNF14 subfamily.

The protein resides in the cytoplasm. It localises to the nucleus. The enzyme catalyses [E2 ubiquitin-conjugating enzyme]-S-ubiquitinyl-L-cysteine + [acceptor protein]-L-lysine = [E2 ubiquitin-conjugating enzyme]-L-cysteine + [acceptor protein]-N(6)-ubiquitinyl-L-lysine.. Its pathway is protein modification; protein ubiquitination. Its function is as follows. E3 ubiquitin-protein ligase involved in the rescue of stalled ribosomes by promoting ubiquitination and degradation of proteins on stalled ribosomes. Specifically required to resolve RNA-protein cross-links caused by reactive aldehydes, which trigger translation stress by stalling ribosomes: acts by catalying 'Lys-6'-linked ubiquitination of RNA-protein cross-links, leading to their degradation. The polypeptide is E3 ubiquitin-protein ligase itt1 (itt1) (Schizosaccharomyces pombe (strain 972 / ATCC 24843) (Fission yeast)).